The chain runs to 55 residues: MCLFMSNSSLPTKPNRKTRFGDRCLLMAKQQRTRLYILRRCVSMLLCWHDHSISD.

Asparagine 7 carries N-linked (GlcNAc...) asparagine glycosylation. Positions 19–50 (RFGDRCLLMAKQQRTRLYILRRCVSMLLCWHD) are required for DVL/RTFL small polypeptide activity. A helical transmembrane segment spans residues 32-48 (RTRLYILRRCVSMLLCW).

This sequence belongs to the DVL/RTFL small polypeptides family.

It is found in the cell membrane. Small polypeptide acting as a regulatory molecule which coordinates cellular responses required for differentiation, growth and development, probably by restricting polar cell proliferation in lateral organs and coordinating socket cell recruitment and differentiation at trichome sites. The chain is Small polypeptide DEVIL 10 from Arabidopsis thaliana (Mouse-ear cress).